The primary structure comprises 520 residues: O-methyltransferase cicE (520 aa).

Residues 300-301, Asp-323, 355-356, and Arg-371 each bind S-adenosyl-L-methionine; these read GG and NF.

It belongs to the class I-like SAM-binding methyltransferase superfamily. Cation-independent O-methyltransferase family.

Its pathway is phytotoxin biosynthesis. Functionally, O-methyltransferase; part of the gene cluster that mediates the biosynthesis of cichorine, a phytotoxin active against knapweed, corn, and soybeans. The first step in the pathway is performed by the non-reducing polyketide synthase pkbA that condenses one acetyl-CoA starter unit with 3 malonyl-CoA units. PkbA also catalyzes one methylation step to produce 3-methylorsellinate. The nonribosomal peptide synthase-like protein cicB, the cytochrome P450 monooxygenase cicH and the O-methyltransferase cicE are involved in the conversion of 3-methylorsellinate into nidulol. CicB converts 3-methylorsellinate to a yet unidentified intermediate, cicH may play a ring-closing role for cichorine and cicE is plausibly responsible for the methylation of one of the phenol groups. The oxidoreductase cicC acts downstream with still unidentified enzymes to further convert nidulol into cichorine. In Emericella nidulans (strain FGSC A4 / ATCC 38163 / CBS 112.46 / NRRL 194 / M139) (Aspergillus nidulans), this protein is O-methyltransferase cicE.